Consider the following 487-residue polypeptide: UPF0324 membrane protein NE0724 (487 aa).

11 helical membrane passes run 19–38, 71–93, 100–119, 139–161, 181–200, 204–226, 269–291, 350–369, 389–411, 426–443, and 456–478; these read WAVW…LWGW, PALS…AWSM, FFIG…IIGN, LSLG…GNFF, AIVF…AGFI, VMTG…YALG, VSIL…YTAI, IWID…VWVY, FPKF…SSGS, GPMR…IGII, and ALLY…AWIF.

Belongs to the UPF0324 family.

The protein localises to the cell membrane. The polypeptide is UPF0324 membrane protein NE0724 (Nitrosomonas europaea (strain ATCC 19718 / CIP 103999 / KCTC 2705 / NBRC 14298)).